Consider the following 221-residue polypeptide: PKHD-type hydroxylase P9303_20491 (221 aa).

One can recognise a Fe2OG dioxygenase domain in the interval 80–174; the sequence is HIHGVMFSRS…RLVCVGWIQS (95 aa). Fe cation contacts are provided by histidine 98, aspartate 100, and histidine 155. Arginine 165 contributes to the 2-oxoglutarate binding site.

Fe(2+) is required as a cofactor. L-ascorbate serves as cofactor.

In Prochlorococcus marinus (strain MIT 9303), this protein is PKHD-type hydroxylase P9303_20491.